Here is a 258-residue protein sequence, read N- to C-terminus: MDDDLTEYAPDIPDNVLELIFSYLKLQDLRNCSLVCKSWNRFLNDENNEVWRAQCMQKLSPDAFKTDLLSVVPTYKAKLRAFFHAWNPYDCSRHVYIKPNGFTLHRNPVAQSTDGSRGKIGFQHGRHAWEVRWEGPLGTVAVVGIATKDAAIQCHGYYALLGADDQSWGWNLVDNLLLHNGDAHGIYPLLNNAPKYKVGERIRVILDCDDNTLSFEKNYEFLGVAFTDLPDKVFYPTVAAVYGNTEISMVYLGPPLDG.

An F-box domain is found at 6 to 54 (TEYAPDIPDNVLELIFSYLKLQDLRNCSLVCKSWNRFLNDENNEVWRAQ). The B30.2/SPRY domain maps to 64–256 (FKTDLLSVVP…ISMVYLGPPL (193 aa)).

Belongs to the FBXO45/Fsn family. Component of an E3 ubiquitin ligase complex composed of hiw and Fsn.

Its subcellular location is the synapse. The protein operates within protein modification; protein ubiquitination. Required in the presynaptic motoneuron to down-regulate the levels of wnd and restrain synaptic terminal growth at the neuromuscular junction (NMJ). In Aedes aegypti (Yellowfever mosquito), this protein is F-box/SPRY domain-containing protein 1.